Reading from the N-terminus, the 154-residue chain is Myoglobin (154 aa).

Positions 2–148 (GLSDGEWQLV…FRNEMAAQYK (147 aa)) constitute a Globin domain. A Phosphoserine modification is found at S4. H65 contacts nitrite. H65 contributes to the O2 binding site. T68 carries the phosphothreonine modification. H94 is a heme b binding site.

In terms of assembly, monomeric.

It localises to the cytoplasm. The protein localises to the sarcoplasm. The enzyme catalyses Fe(III)-heme b-[protein] + nitric oxide + H2O = Fe(II)-heme b-[protein] + nitrite + 2 H(+). It catalyses the reaction H2O2 + AH2 = A + 2 H2O. Monomeric heme protein which primary function is to store oxygen and facilitate its diffusion within muscle tissues. Reversibly binds oxygen through a pentacoordinated heme iron and enables its timely and efficient release as needed during periods of heightened demand. Depending on the oxidative conditions of tissues and cells, and in addition to its ability to bind oxygen, it also has a nitrite reductase activity whereby it regulates the production of bioactive nitric oxide. Under stress conditions, like hypoxia and anoxia, it also protects cells against reactive oxygen species thanks to its pseudoperoxidase activity. In Bubalus bubalis (Domestic water buffalo), this protein is Myoglobin.